Here is a 1119-residue protein sequence, read N- to C-terminus: G8 domain-containing protein DDB_G0288475 (1119 aa).

A signal peptide spans 1 to 22 (MKYSSFLLLFIYIFFILNNINA). A G8 domain is found at 276-404 (TIWTSGVVPL…YHNTWTKLAA (129 aa)). Residues Asn308, Asn559, Asn736, Asn854, Asn968, Asn1035, Asn1056, and Asn1070 are each glycosylated (N-linked (GlcNAc...) asparagine).

It belongs to the comF family.

It is found in the secreted. This is G8 domain-containing protein DDB_G0288475 from Dictyostelium discoideum (Social amoeba).